The following is a 632-amino-acid chain: Mitochondrial distribution and morphology protein 34 (632 aa).

Residues 1 to 203 form the SMP-LTD domain; the sequence is MSFKVNWNSL…LPTLIHQLSL (203 aa). 2 disordered regions span residues 221 to 253 and 384 to 435; these read ANAS…TSSL and KPKR…SSTL. Residues 224 to 252 show a composition bias toward low complexity; it reads STSSSSTSSTSSSTTSSSSSSSPSSFTSS. Residues 384-400 are compositionally biased toward basic residues; the sequence is KPKRRVIRLGKSKNKSK. A compositionally biased stretch (basic and acidic residues) spans 401–412; that stretch reads SKTETKTEHNDE. A compositionally biased stretch (low complexity) spans 422-435; sequence PLSSTPASSSSSTL.

Belongs to the MDM34 family. As to quaternary structure, component of the ER-mitochondria encounter structure (ERMES) or MDM complex, composed of MMM1, MDM10, MDM12 and MDM34.

Its subcellular location is the mitochondrion outer membrane. Its function is as follows. Component of the ERMES/MDM complex, which serves as a molecular tether to connect the endoplasmic reticulum (ER) and mitochondria. Components of this complex are involved in the control of mitochondrial shape and protein biogenesis, and function in nonvesicular lipid trafficking between the ER and mitochondria. MDM34 is required for the interaction of the ER-resident membrane protein MMM1 and the outer mitochondrial membrane-resident beta-barrel protein MDM10. This chain is Mitochondrial distribution and morphology protein 34, found in Lodderomyces elongisporus (strain ATCC 11503 / CBS 2605 / JCM 1781 / NBRC 1676 / NRRL YB-4239) (Yeast).